Here is a 396-residue protein sequence, read N- to C-terminus: S-adenosylmethionine synthase 2 (396 aa).

A Mg(2+)-binding site is contributed by Glu-13. Position 19 (His-19) interacts with ATP. Glu-47 is a binding site for K(+). Glu-60 and Gln-103 together coordinate L-methionine. Residues 171-173 (DGK), 239-242 (SGRF), Asp-250, 256-257 (RK), Ala-273, Lys-277, and Lys-281 each bind ATP. An L-methionine-binding site is contributed by Asp-250. Residue Lys-281 participates in L-methionine binding.

It belongs to the AdoMet synthase family. Homotetramer. Requires Mn(2+) as cofactor. Mg(2+) is required as a cofactor. The cofactor is Co(2+). K(+) serves as cofactor.

It is found in the cytoplasm. It carries out the reaction L-methionine + ATP + H2O = S-adenosyl-L-methionine + phosphate + diphosphate. It participates in amino-acid biosynthesis; S-adenosyl-L-methionine biosynthesis; S-adenosyl-L-methionine from L-methionine: step 1/1. Catalyzes the formation of S-adenosylmethionine from methionine and ATP. The reaction comprises two steps that are both catalyzed by the same enzyme: formation of S-adenosylmethionine (AdoMet) and triphosphate, and subsequent hydrolysis of the triphosphate. The chain is S-adenosylmethionine synthase 2 (SAM2) from Dianthus caryophyllus (Carnation).